Here is a 137-residue protein sequence, read N- to C-terminus: Putative pre-16S rRNA nuclease (137 aa).

Belongs to the YqgF nuclease family.

It localises to the cytoplasm. Could be a nuclease involved in processing of the 5'-end of pre-16S rRNA. This is Putative pre-16S rRNA nuclease from Bacillus cereus (strain AH187).